A 282-amino-acid polypeptide reads, in one-letter code: S-formylglutathione hydrolase (282 aa).

The residue at position 2 (Ala-2) is an N-acetylalanine. Lys-4 is subject to N6-succinyllysine. Active-site charge relay system residues include Ser-149, Asp-226, and His-260.

The protein belongs to the esterase D family. In terms of assembly, homodimer.

Its subcellular location is the cytoplasm. It localises to the cytoplasmic vesicle. The catalysed reaction is S-formylglutathione + H2O = formate + glutathione + H(+). Its function is as follows. Serine hydrolase involved in the detoxification of formaldehyde. This Bos taurus (Bovine) protein is S-formylglutathione hydrolase (ESD).